The sequence spans 115 residues: MNLMLTLLTNTLLASLLVLIAFWLPQLNIYAEKTSPYECGFDPMGSARLPFSMKFFLVAITFLLFDLEIALLLPLPWASQTTNLNTMLIMALVLISLLAISLAYEWTQKGLEWTE.

Transmembrane regions (helical) follow at residues 3–23, 55–75, and 84–104; these read LMLT…IAFW, FFLV…LLPL, and LNTM…SLAY.

The protein belongs to the complex I subunit 3 family. In terms of assembly, core subunit of respiratory chain NADH dehydrogenase (Complex I) which is composed of 45 different subunits. Interacts with TMEM186. Interacts with TMEM242.

Its subcellular location is the mitochondrion inner membrane. It catalyses the reaction a ubiquinone + NADH + 5 H(+)(in) = a ubiquinol + NAD(+) + 4 H(+)(out). In terms of biological role, core subunit of the mitochondrial membrane respiratory chain NADH dehydrogenase (Complex I) which catalyzes electron transfer from NADH through the respiratory chain, using ubiquinone as an electron acceptor. Essential for the catalytic activity of complex I. The sequence is that of NADH-ubiquinone oxidoreductase chain 3 from Equus caballus (Horse).